Consider the following 179-residue polypeptide: Large ribosomal subunit protein uL5 (179 aa).

It belongs to the universal ribosomal protein uL5 family. As to quaternary structure, part of the 50S ribosomal subunit; part of the 5S rRNA/L5/L18/L25 subcomplex. Contacts the 5S rRNA and the P site tRNA. Forms a bridge to the 30S subunit in the 70S ribosome.

Functionally, this is one of the proteins that bind and probably mediate the attachment of the 5S RNA into the large ribosomal subunit, where it forms part of the central protuberance. In the 70S ribosome it contacts protein S13 of the 30S subunit (bridge B1b), connecting the 2 subunits; this bridge is implicated in subunit movement. Contacts the P site tRNA; the 5S rRNA and some of its associated proteins might help stabilize positioning of ribosome-bound tRNAs. This chain is Large ribosomal subunit protein uL5, found in Herpetosiphon aurantiacus (strain ATCC 23779 / DSM 785 / 114-95).